Reading from the N-terminus, the 504-residue chain is DnaJ homolog subfamily C member 3 (504 aa).

Residues 1–31 (MVAPGSVRSRLGAVFPFLLVLVDLQYEGAEC) form the signal peptide. TPR repeat units lie at residues 37–70 (VEKHLELGKKLLAAGQLADALSQFHAAVDGDPDN), 72–104 (IAYYRRATVFLAMGKSKAALPDLTRVIELKMDF), 105–138 (TAARLQRGHLLLKQGRLAEAEDDFKKVLKSNPSE), 154–187 (MQRLRAQALDAFDSADYTAAITFLDEILEVCVWD), 188–221 (AELRELRAECFIKEGEPRKAISDLKAASKLKNDN), 222–255 (TEAFYKISILYYQLGDHELSLSEVRECLKLDQDH), 268–301 (LNKLIGSAEELIRDGRYTDATSKYESVMKAEPSV), 306–339 (VRSKERICHCFSKDEKPVEAIKICSEVLQLEPDN), and 340–373 (VNALKDRAEAYLIEEMYDEAIQDYEAAQEQNEND). An intrachain disulfide couples cysteine 248 to cysteine 258. Serine 274 bears the Phosphoserine mark. Cysteine 313 and cysteine 329 are oxidised to a cystine. Positions 375–393 (QIREGLEKAQRLLKQSQKR) are flexible linker. The region spanning 394–462 (DYYKILGVKR…EMRRKFDDGE (69 aa)) is the J domain. The interval 451-481 (DPEMRRKFDDGEDPLDAETQQGGGSNPFHRS) is disordered. Residue serine 475 is modified to Phosphoserine.

In terms of assembly, interacts with EIF2AK2 and EIF2AK3. Forms a trimeric complex with DNAJB1 and HSPA8. Interacts with THAP12.

Its subcellular location is the endoplasmic reticulum. In terms of biological role, involved in the unfolded protein response (UPR) during ER stress. Co-chaperone of HSPA8/HSC70, it stimulates its ATPase activity. May inhibit both the autophosphorylation of EIF2AK2/PKR and the ability of EIF2AK2 to catalyze phosphorylation of the EIF2A. May inhibit EIF2AK3/PERK activity. The sequence is that of DnaJ homolog subfamily C member 3 (Dnajc3) from Rattus norvegicus (Rat).